A 248-amino-acid chain; its full sequence is Exosome complex component Rrp41 (248 aa).

Belongs to the RNase PH family. Rrp41 subfamily. In terms of assembly, component of the archaeal exosome complex. Forms a hexameric ring-like arrangement composed of 3 Rrp41-Rrp42 heterodimers. The hexameric ring associates with a trimer of Rrp4 and/or Csl4 subunits.

It is found in the cytoplasm. Catalytic component of the exosome, which is a complex involved in RNA degradation. Has 3'-&gt;5' exoribonuclease activity. Can also synthesize heteromeric RNA-tails. This is Exosome complex component Rrp41 from Thermoplasma volcanium (strain ATCC 51530 / DSM 4299 / JCM 9571 / NBRC 15438 / GSS1).